The sequence spans 243 residues: 2-C-methyl-D-erythritol 4-phosphate cytidylyltransferase (243 aa).

It belongs to the IspD/TarI cytidylyltransferase family. IspD subfamily.

The enzyme catalyses 2-C-methyl-D-erythritol 4-phosphate + CTP + H(+) = 4-CDP-2-C-methyl-D-erythritol + diphosphate. Its pathway is isoprenoid biosynthesis; isopentenyl diphosphate biosynthesis via DXP pathway; isopentenyl diphosphate from 1-deoxy-D-xylulose 5-phosphate: step 2/6. Its function is as follows. Catalyzes the formation of 4-diphosphocytidyl-2-C-methyl-D-erythritol from CTP and 2-C-methyl-D-erythritol 4-phosphate (MEP). In Aeromonas hydrophila subsp. hydrophila (strain ATCC 7966 / DSM 30187 / BCRC 13018 / CCUG 14551 / JCM 1027 / KCTC 2358 / NCIMB 9240 / NCTC 8049), this protein is 2-C-methyl-D-erythritol 4-phosphate cytidylyltransferase.